The primary structure comprises 297 residues: E3 ubiquitin-protein ligase RNF212B (297 aa).

An RING-type zinc finger spans residues 6–40; it reads CNQCFRKDGAHFFVTSCGHIFCKKCMTLEKCAVCG. Positions 87 to 136 form a coiled coil; it reads LLIAFYKDRITKLEAAVKEAQEMAASQNKELSALRKENGELKKILDILKG. 2 disordered regions span residues 152 to 179 and 198 to 269; these read VGIT…RSSS and RGLH…ESLP. Residues 163-179 show a composition bias toward low complexity; that stretch reads PRPSSHHSSQVVSRSSS. Polar residues predominate over residues 206 to 234; that stretch reads PGDSYTETPSPASTHSLSYRPSSASSGQG.

In terms of assembly, homodimer. Post-translationally, autoubiquitinated.

The protein resides in the chromosome. It catalyses the reaction S-ubiquitinyl-[E2 ubiquitin-conjugating enzyme]-L-cysteine + [acceptor protein]-L-lysine = [E2 ubiquitin-conjugating enzyme]-L-cysteine + N(6)-ubiquitinyl-[acceptor protein]-L-lysine.. The protein operates within protein modification; protein ubiquitination. Its function is as follows. Ubiquitin E3 ligase that acts as a crucial factor for crossing-over (CO) formation during meiosis. Essential for normal prophase I progression and for ensuring appropriate CO designation in meiosis. Recruits key components of the cross-over machinery either directly ou indirectly, leading to the activation of the MutL-gamma complex. The function of RNF212B in CO designation is dependent on its catalytic activity. The protein is E3 ubiquitin-protein ligase RNF212B (Rnf212b) of Mus musculus (Mouse).